Reading from the N-terminus, the 244-residue chain is NAD(P)H-quinone oxidoreductase subunit K (244 aa).

Residues C51, C52, C116, and C147 each contribute to the [4Fe-4S] cluster site.

It belongs to the complex I 20 kDa subunit family. NDH-1 can be composed of about 15 different subunits; different subcomplexes with different compositions have been identified which probably have different functions. It depends on [4Fe-4S] cluster as a cofactor.

It is found in the cellular thylakoid membrane. It carries out the reaction a plastoquinone + NADH + (n+1) H(+)(in) = a plastoquinol + NAD(+) + n H(+)(out). The enzyme catalyses a plastoquinone + NADPH + (n+1) H(+)(in) = a plastoquinol + NADP(+) + n H(+)(out). Its function is as follows. NDH-1 shuttles electrons from an unknown electron donor, via FMN and iron-sulfur (Fe-S) centers, to quinones in the respiratory and/or the photosynthetic chain. The immediate electron acceptor for the enzyme in this species is believed to be plastoquinone. Couples the redox reaction to proton translocation, and thus conserves the redox energy in a proton gradient. Cyanobacterial NDH-1 also plays a role in inorganic carbon-concentration. The chain is NAD(P)H-quinone oxidoreductase subunit K from Synechococcus sp. (strain JA-3-3Ab) (Cyanobacteria bacterium Yellowstone A-Prime).